A 380-amino-acid chain; its full sequence is SAM and SH3 domain-containing protein 3 (380 aa).

The tract at residues 1 to 174 is disordered; that stretch reads MLRRKPSNAS…STAPQYTGPF (174 aa). Over residues 22 to 41 the composition is skewed to low complexity; that stretch reads LQRSSSFKDFAKSKPSSPVV. Residues Ser27, Ser34, and Ser42 each carry the phosphoserine modification. At Thr61 the chain carries Phosphothreonine. Basic residues predominate over residues 84–93; sequence MNRKTGKKMV. Residue Ser97 is modified to Phosphoserine. The residue at position 103 (Thr103) is a Phosphothreonine. Ser110 bears the Phosphoserine mark. A Phosphothreonine modification is found at Thr112. A phosphoserine mark is found at Ser113 and Ser120. Polar residues predominate over residues 143–158; sequence RQASTGSELCSPSPGS. One can recognise an SH3 domain in the interval 173-234; sequence PFCGRARVHT…KFIYVDVLPE (62 aa). The 65-residue stretch at 252–316 folds into the SAM domain; it reads PKPKTLHELL…LTAAELLLDY (65 aa). Position 318 is a phosphothreonine (Thr318). Residues 318–327 are compositionally biased toward acidic residues; sequence TGSEEAEEGT. The disordered stretch occupies residues 318 to 380; that stretch reads TGSEEAEEGT…LHGLSLSGAP (63 aa). Ser320 is modified (phosphoserine).

This sequence belongs to the SASH family.

Functionally, may function as a signaling adapter protein in lymphocytes. This chain is SAM and SH3 domain-containing protein 3, found in Bos taurus (Bovine).